The sequence spans 301 residues: Troponin T, cardiac muscle (301 aa).

Residues 1-72 (MSDAEEVVEE…EAKDAEEGPV (72 aa)) are compositionally biased toward acidic residues. 2 disordered regions span residues 1–97 (MSDA…DGER) and 125–224 (NRKK…KKKI). The residue at position 2 (Ser-2) is an N-acetylserine. A Phosphoserine; by CK2 modification is found at Ser-2. Composition is skewed to basic and acidic residues over residues 125 to 186 (NRKK…DEAR) and 206 to 224 (QTER…KKKI). The residue at position 207 (Thr-207) is a Phosphothreonine; by PKC/PRKCA. At Ser-211 the chain carries Phosphoserine; by PKC/PRKCA. Thr-216 is modified (phosphothreonine; by PKC/PRKCA and RAF1). Thr-297 carries the post-translational modification Phosphothreonine; by PKC/PRKCA.

It belongs to the troponin T family. Post-translationally, phosphorylation at Thr-216 by PRKCA induces significant reduction in myofilament calcium sensitivity and actomyosin ATPase activity.

In terms of biological role, troponin T is the tropomyosin-binding subunit of troponin, the thin filament regulatory complex which confers calcium-sensitivity to striated muscle actomyosin ATPase activity. The sequence is that of Troponin T, cardiac muscle (Tnnt2) from Mus musculus (Mouse).